The chain runs to 1354 residues: RNA-directed RNA polymerase VP1 (1354 aa).

It carries out the reaction RNA(n) + a ribonucleoside 5'-triphosphate = RNA(n+1) + diphosphate. RNA-directed RNA polymerase that is involved in transcription and genome replication. Following infection, it catalyzes the synthesis of fully conservative plus strands. After core assembly, which consists in recruitment of one capped plus-strand for each genomic segments and polymerase complexes, the polymerase switches mode and catalyzes the synthesis of complementary minus-strands. The sequence is that of RNA-directed RNA polymerase VP1 from Cryphonectria parasitica mycoreovirus 1 (strain 9B21) (CpMYRV-1).